Consider the following 402-residue polypeptide: MIEFPVVLVINCGSSSVKFSVLDAASCEALITGIADGVNTENAFISVNGGEPAPLARKDYEGALAAIALELEARDLMGSVALIGHRIAHGGSVFSESTPITDEVIDQIREISPLAPLHNYANLSGVEAAKHLFPGVQQVAVFDTSFHQTLAPQAYLYGLPYRYFEELGVRRYGFHGTSHRYVAQQAYSLLDIPQQDSGLVIAHLGNGASICAVRNGESVDTSMGMTPLEGLVMGTRCGDVDFGAMAWIAQQTGQTLDDLERVVNKESGLLGISGLSSDLRTLEKAWHDGHERARLAIETFVHRIARHIAGHAASLHRLDGVVFTGGIGENSKLIRQLVTDRLKVFGITLDPLKNALPGSAGERIITTDDSDVPCAVIPTNEEKMIALDAIRLGKVHPAAAYA.

Positions 11 and 18 each coordinate ATP. Residue N11 coordinates Mg(2+). Residue R86 coordinates substrate. Catalysis depends on D143, which acts as the Proton donor/acceptor. Residues H175, 203–207, 278–280, and 326–330 each bind ATP; these read HLGNG, DLR, and GIGEN.

This sequence belongs to the acetokinase family. TdcD subfamily. In terms of assembly, homodimer. The cofactor is Mg(2+).

The catalysed reaction is propanoate + ATP = propanoyl phosphate + ADP. It participates in amino-acid degradation; L-threonine degradation via propanoate pathway; propanoate from L-threonine: step 4/4. Functionally, catalyzes the conversion of propionyl phosphate and ADP to propionate and ATP. The polypeptide is Propionate kinase (Enterobacter sp. (strain 638)).